The sequence spans 281 residues: MGLEEKLPGGVLLASVEKLANWSRRSSLWPATFGLACCAIEMMSTGAGRYDLSRFGMEVFRASPRQADLMIVAGRVSQKMAPVLRQIYDQMPEPKWVLSMGVCASSGGMFNNYAIVQGVDHIVPVDMYLPGCPPRPEMLMDAIIKLHEKILAGPVTGRTAHTESGSSPYPKPIDVATARAGLPAGELDTRTLSVNDRKRFRIPAGAPVPTGRGAVEPVLDTRRPAAIAPPSVFGRAKGIPVDAKPLDESRAHGPGPTTADIADAADTADSDAAPGATHDTP.

C37, C38, C103, and C132 together coordinate [4Fe-4S] cluster. Residues 242-281 (DAKPLDESRAHGPGPTTADIADAADTADSDAAPGATHDTP) are disordered. The span at 257 to 281 (TTADIADAADTADSDAAPGATHDTP) shows a compositional bias: low complexity.

The protein belongs to the complex I 20 kDa subunit family. In terms of assembly, NDH-1 is composed of 14 different subunits. Subunits NuoB, C, D, E, F, and G constitute the peripheral sector of the complex. [4Fe-4S] cluster serves as cofactor.

It is found in the cell membrane. The enzyme catalyses a quinone + NADH + 5 H(+)(in) = a quinol + NAD(+) + 4 H(+)(out). Its function is as follows. NDH-1 shuttles electrons from NADH, via FMN and iron-sulfur (Fe-S) centers, to quinones in the respiratory chain. The immediate electron acceptor for the enzyme in this species is believed to be a menaquinone. Couples the redox reaction to proton translocation (for every two electrons transferred, four hydrogen ions are translocated across the cytoplasmic membrane), and thus conserves the redox energy in a proton gradient. This Frankia alni (strain DSM 45986 / CECT 9034 / ACN14a) protein is NADH-quinone oxidoreductase subunit B.